We begin with the raw amino-acid sequence, 129 residues long: Antileukoproteinase (129 aa).

Positions 1–22 are cleaved as a signal peptide; sequence GRGLLPFVLLALGIXAPWAVEG. WAP domains lie at 25–73 and 79–127; these read NALK…LNPV and VKVK…LTPV. Cystine bridges form between Cys32-Cys61, Cys40-Cys65, Cys48-Cys60, Cys54-Cys69, Cys86-Cys115, Cys93-Cys119, Cys102-Cys114, and Cys108-Cys123. Residues 81-129 form an elastase inhibitory domain region; that stretch reads VKPGKCPVVYGQCMMLNPPNHCKTDSQCLGDLKCCKSMCGKVCLTPVKA.

Interacts with GRN; interaction protects progranulin from proteolysis. Found in pregnant endometrium and myometrium, placenta, allantoic fluids, fetal cord blood, and fetal liver. Also found in uterus and lung.

Its subcellular location is the secreted. In terms of biological role, acid-stable proteinase inhibitor with strong affinities for trypsin, chymotrypsin, elastase, and cathepsin G. Modulates the inflammatory and immune responses after bacterial infection, and after infection by the intracellular parasite L.major. Down-regulates responses to bacterial lipopolysaccharide (LPS). Plays a role in regulating the activation of NF-kappa-B and inflammatory responses. Has antimicrobial activity against mycobacteria, but not against salmonella. Contributes to normal resistance against infection by M.tuberculosis. Required for normal resistance to infection by L.major. Required for normal wound healing, probably by preventing tissue damage by limiting protease activity. Together with ELANE, required for normal differentiation and proliferation of bone marrow myeloid cells. This chain is Antileukoproteinase (SLPI), found in Sus scrofa (Pig).